A 407-amino-acid polypeptide reads, in one-letter code: Rubber oxygenase (407 aa).

A signal peptide (tat-type signal) is located at residues 1–30 (MDGFSRRRMLMTGGALGAVGALGAATRALA). His198 contributes to the heme binding site.

The protein belongs to the rubber oxygenase Lcp family. Heme b serves as cofactor. Exported by the Tat system. The position of the signal peptide cleavage has not been experimentally proven.

It localises to the secreted. It participates in biopolymer metabolism. Functionally, involved in the initial step of rubber degradation. Catalyzes the oxidative C-C cleavage of poly(cis-1,4-isoprene) in synthetic as well as in natural rubber by the addition of oxygen (O2) to the double bonds, leading to a mixture of oligonucleotide-isoprenoids with terminal keto and aldehyde groups (endo-type cleavage). The cleavage products are of different lengths, ranging from C20 (four isoprene units) to higher oligo-isoprenoids. Is not able to cleave low-molecular-weight substrate analogs with isoprenoid structure such as squalene (1,4-trans-isoprenoid), carotenoids, or alpha-tocopherol. This is Rubber oxygenase from Streptomyces sp. (strain K30).